The chain runs to 176 residues: Nucleoside triphosphate/diphosphate phosphatase (176 aa).

R23 serves as the catalytic Proton donor. 6 residues coordinate Mg(2+): N87, D103, D105, D107, D120, and E123.

This sequence belongs to the Ntdp family. The cofactor is Mg(2+).

The enzyme catalyses a ribonucleoside 5'-triphosphate + H2O = a ribonucleoside 5'-diphosphate + phosphate + H(+). It carries out the reaction a ribonucleoside 5'-diphosphate + H2O = a ribonucleoside 5'-phosphate + phosphate + H(+). Its function is as follows. Has nucleoside phosphatase activity towards nucleoside triphosphates and nucleoside diphosphates. The sequence is that of Nucleoside triphosphate/diphosphate phosphatase (ygaC) from Bacillus subtilis (strain 168).